Here is a 116-residue protein sequence, read N- to C-terminus: Thioredoxin (116 aa).

One can recognise a Thioredoxin domain in the interval 2–113 (TDSEKSATIK…LLRELSDVVP (112 aa)). The cysteines at positions 37 and 40 are disulfide-linked.

It belongs to the thioredoxin family.

Its function is as follows. Participates in various redox reactions through the reversible oxidation of its active center dithiol to a disulfide and catalyzes dithiol-disulfide exchange reactions. The chain is Thioredoxin (trxA) from Mycobacterium bovis (strain ATCC BAA-935 / AF2122/97).